The chain runs to 404 residues: NADH-quinone oxidoreductase subunit D 2 (404 aa).

The protein belongs to the complex I 49 kDa subunit family. In terms of assembly, NDH-1 is composed of 14 different subunits. Subunits NuoB, C, D, E, F, and G constitute the peripheral sector of the complex.

Its subcellular location is the cell inner membrane. It catalyses the reaction a quinone + NADH + 5 H(+)(in) = a quinol + NAD(+) + 4 H(+)(out). NDH-1 shuttles electrons from NADH, via FMN and iron-sulfur (Fe-S) centers, to quinones in the respiratory chain. The immediate electron acceptor for the enzyme in this species is believed to be ubiquinone. Couples the redox reaction to proton translocation (for every two electrons transferred, four hydrogen ions are translocated across the cytoplasmic membrane), and thus conserves the redox energy in a proton gradient. In Rhizobium etli (strain CIAT 652), this protein is NADH-quinone oxidoreductase subunit D 2.